We begin with the raw amino-acid sequence, 40 residues long: Cytolysin SmT-1 (40 aa).

The interval 3–12 is plays an important role in the hemolytic activity; sequence ALAGTIIAGA. The segment at 11-30 is N-terminal region; sequence GASLGFQILDKVLGELGKVS.

The protein belongs to the actinoporin family. Sea anemone subfamily. Octamer or nonamer in membranes. Monomer in the soluble state.

The protein localises to the secreted. The protein resides in the nematocyst. It is found in the target cell membrane. Its function is as follows. Pore-forming protein that forms cations-selective hydrophilic pores of around 1 nm and causes cardiac stimulation and cytolysis. Pore formation is a multi-step process that involves specific recognition of membrane sphingomyelin (but neither cholesterol nor phosphatidylcholine) using aromatic rich region and adjacent phosphocholine (POC) binding site, firm binding to the membrane (mainly driven by hydrophobic interactions) accompanied by the transfer of the N-terminal region to the lipid-water interface and finally pore formation after oligomerization of monomers. This toxin shows hemolytic activities. The sequence is that of Cytolysin SmT-1 from Stichodactyla mertensii (Merten's carpet sea anemone).